Consider the following 87-residue polypeptide: U3-theraphotoxin-Hhn1q (87 aa).

Residues 1–24 (MVNMKASMFLTFAGLVLLFVVCYA) form the signal peptide. Positions 25 to 52 (SESEEKEFPKEMLSSIFAVDNDFKQEER) are excised as a propeptide. 3 disulfide bridges follow: Cys-54–Cys-67, Cys-61–Cys-72, and Cys-66–Cys-79.

The protein belongs to the neurotoxin 10 (Hwtx-1) family. 51 (Hntx-8) subfamily. Hntx-8 sub-subfamily. Expressed by the venom gland.

The protein localises to the secreted. In terms of biological role, ion channel inhibitor. The chain is U3-theraphotoxin-Hhn1q from Cyriopagopus hainanus (Chinese bird spider).